Here is a 395-residue protein sequence, read N- to C-terminus: Neuromedin-U receptor 2 (395 aa).

The Extracellular segment spans residues 1–41 (MGKLENASWIHDPLMKYLNSTEEYLAHLCGPKRSDLSLPVS). 2 N-linked (GlcNAc...) asparagine glycosylation sites follow: asparagine 6 and asparagine 19. Residues 42–62 (VAYALIFLVGVMGNLLVCMVI) form a helical membrane-spanning segment. The Cytoplasmic portion of the chain corresponds to 63–74 (VRHQTLKTPTNY). The helical transmembrane segment at 75–95 (YLFSLAVSDLLVLLLGMPLEI) threads the bilayer. Residues 96 to 115 (YEMWHNYPFLFGPVGCYFKT) lie on the Extracellular side of the membrane. A disulfide bridge links cysteine 111 with cysteine 196. Residues 116–138 (ALFETVCFASILSVTTVSVERYV) traverse the membrane as a helical segment. Topologically, residues 139 to 157 (AIVHPFRAKLESTRRRALR) are cytoplasmic. A helical membrane pass occupies residues 158–178 (ILSLVWSFSVVFSLPNTSIHG). Residues 179-212 (IKFQHFPNGSSVPGSATCTVTKPMWVYNLIIQAT) lie on the Extracellular side of the membrane. A glycan (N-linked (GlcNAc...) asparagine) is linked at asparagine 186. Residues 213-233 (SFLFYILPMTLISVLYYLMGL) traverse the membrane as a helical segment. The Cytoplasmic segment spans residues 234–257 (RLKRDESLEANKVAVNIHRPSRKS). A helical membrane pass occupies residues 258 to 278 (VTKMLFVLVLVFAICWTPFHV). The Extracellular segment spans residues 279 to 293 (DRLFFSFVEEWTESL). Residues 294-314 (AAVFNLIHVVSGVFFYLSSAV) form a helical membrane-spanning segment. At 315-395 (NPIIYNLLSR…TTAPCAGEVP (81 aa)) the chain is on the cytoplasmic side. Residues 374-395 (FPGQSSIHNTNLTTAPCAGEVP) form a disordered region. A compositionally biased stretch (polar residues) spans 375-387 (PGQSSIHNTNLTT).

Belongs to the G-protein coupled receptor 1 family. The highest level is detected in the uterus. In the central nervous system, high expression levels were found in the hypothalamus and moderate levels in both the medulla oblongata and spinal cord. Expressed in the hypothalamic paraventricular nucleus (PVN) and suprachiasmatic nuclei (SCN) of the hypothalamus. Expression is low in the gastrointestinal tract. In other peripheral tissues, moderate expression was observed in the lung and ovary.

Its subcellular location is the cell membrane. Functionally, receptor for the neuromedin-U and neuromedin-S neuropeptides. In Rattus norvegicus (Rat), this protein is Neuromedin-U receptor 2 (Nmur2).